The chain runs to 681 residues: Transcriptional regulator prz1 (681 aa).

Basic and acidic residues predominate over residues 1-15 (MERQRSEEANRRFKD). Disordered regions lie at residues 1-29 (MERQ…SKPD), 66-96 (NPSK…DSYP), 340-372 (SHQS…NSPF), 410-433 (PQIN…ANPL), and 520-563 (KIEN…AKSE). Composition is skewed to polar residues over residues 66–86 (NPSK…FKTS) and 340–358 (SHQS…LNSE). The segment covering 416–428 (PSSPSKSQSGPSL) has biased composition (low complexity). A compositionally biased stretch (polar residues) spans 528–549 (SNDYLSVRNTRPRSRSLNSLVG). Phosphoserine is present on residues Ser-543 and Ser-546. Over residues 550–559 (NKSENSSSSK) the composition is skewed to low complexity. C2H2-type zinc fingers lie at residues 570–594 (YVCT…MNTH) and 600–622 (FQCS…EQLH). The C2H2-type 3; degenerate zinc-finger motif lies at 628-650 (FACVTCNQRFARMDALNRHYKSE). The interval 662–681 (RGIQVPPSRKTAVASTSKQK) is disordered.

It belongs to the EGR C2H2-type zinc-finger protein family. In terms of processing, phosphorylated. Dephosphorylated by calcineurin which leads to rapid translocation from the cytoplasm to the nucleus.

The protein resides in the nucleus. It localises to the cytoplasm. In terms of biological role, involved in the regulation of calcium ion homeostasis. Binds to the calcineurin-dependent response element. Transcriptionally regulates pmc1. This chain is Transcriptional regulator prz1 (prz1), found in Schizosaccharomyces pombe (strain 972 / ATCC 24843) (Fission yeast).